We begin with the raw amino-acid sequence, 277 residues long: Inhibition of morphological differentiation protein (277 aa).

Positions 18, 20, and 192 each coordinate Mg(2+).

The protein belongs to the HAD-like hydrolase superfamily. SerB family.

This is Inhibition of morphological differentiation protein from Streptomyces azureus.